Reading from the N-terminus, the 426-residue chain is Glutamyl-tRNA reductase (426 aa).

Substrate is bound by residues 49–52 (TCNR), serine 109, 114–116 (EGQ), and glutamine 120. The active-site Nucleophile is the cysteine 50. 189–194 (GAGKMS) serves as a coordination point for NADP(+).

The protein belongs to the glutamyl-tRNA reductase family. As to quaternary structure, homodimer.

It carries out the reaction (S)-4-amino-5-oxopentanoate + tRNA(Glu) + NADP(+) = L-glutamyl-tRNA(Glu) + NADPH + H(+). Its pathway is porphyrin-containing compound metabolism; protoporphyrin-IX biosynthesis; 5-aminolevulinate from L-glutamyl-tRNA(Glu): step 1/2. It functions in the pathway porphyrin-containing compound metabolism; chlorophyll biosynthesis. Functionally, catalyzes the NADPH-dependent reduction of glutamyl-tRNA(Glu) to glutamate 1-semialdehyde (GSA). In Thermosynechococcus vestitus (strain NIES-2133 / IAM M-273 / BP-1), this protein is Glutamyl-tRNA reductase.